The primary structure comprises 486 residues: Aspartyl/glutamyl-tRNA(Asn/Gln) amidotransferase subunit B (486 aa).

Belongs to the GatB/GatE family. GatB subfamily. Heterotrimer of A, B and C subunits.

It catalyses the reaction L-glutamyl-tRNA(Gln) + L-glutamine + ATP + H2O = L-glutaminyl-tRNA(Gln) + L-glutamate + ADP + phosphate + H(+). The catalysed reaction is L-aspartyl-tRNA(Asn) + L-glutamine + ATP + H2O = L-asparaginyl-tRNA(Asn) + L-glutamate + ADP + phosphate + 2 H(+). Its function is as follows. Allows the formation of correctly charged Asn-tRNA(Asn) or Gln-tRNA(Gln) through the transamidation of misacylated Asp-tRNA(Asn) or Glu-tRNA(Gln) in organisms which lack either or both of asparaginyl-tRNA or glutaminyl-tRNA synthetases. The reaction takes place in the presence of glutamine and ATP through an activated phospho-Asp-tRNA(Asn) or phospho-Glu-tRNA(Gln). This is Aspartyl/glutamyl-tRNA(Asn/Gln) amidotransferase subunit B from Janthinobacterium sp. (strain Marseille) (Minibacterium massiliensis).